The chain runs to 1435 residues: Gag-Pol polyprotein (1435 aa).

Gly-2 carries N-myristoyl glycine; by host lipidation. The tract at residues 7–31 (VLSGGKLDRWEKIRLRPGGKKKYKL) is interaction with Gp41. An interaction with host CALM1 region spans residues 8–43 (LSGGKLDRWEKIRLRPGGKKKYKLKHIVWASRELER). Residues 12–19 (KLDRWEKI) are interaction with host AP3D1. Positions 14–33 (DRWEKIRLRPGGKKKYKLKH) are interaction with membrane phosphatidylinositol 4,5-bisphosphate and RNA. The Nuclear export signal motif lies at 16–22 (WEKIRLR). The Nuclear localization signal signature appears at 26–32 (KKKYKLK). Residues 73–77 (EECRS) are interaction with membrane phosphatidylinositol 4,5-bisphosphate. The segment at 107–128 (EQNKSKKKAQQAAADTGHSSQV) is disordered. Tyr-132 carries the phosphotyrosine; by host modification. The interval 189–227 (NTVGGHQAAMQMLKETINEEAAEWDRVHPVHAGPIAPGQ) is interaction with human PPIA/CYPA and NUP153. The segment at 277-363 (YSPTSILDIR…GGPGHKARVL (87 aa)) is dimerization/Multimerization of capsid protein p24. 2 CCHC-type zinc fingers span residues 390 to 407 (VKCF…NCRA) and 411 to 428 (KGCW…DCTE). Positions 449–481 (SSEQTRANSPTRRELQVWGRDNNSPSEAGADRQ) are disordered. Residues 489–493 (PQITL) are dimerization of protease. In terms of domain architecture, Peptidase A2 spans 508 to 577 (KEALLDTGAD…TPVNIIGRNL (70 aa)). The active-site For protease activity; shared with dimeric partner is Asp-513. Dimerization of protease stretches follow at residues 537 to 543 (GIGGFIK) and 576 to 588 (NLLT…LNFP). The 191-residue stretch at 631 to 821 (EGKISKIGPE…PPFLWMGYEL (191 aa)) folds into the Reverse transcriptase domain. Residues Asp-697, Asp-772, and Asp-773 each coordinate Mg(2+). Positions 814-822 (FLWMGYELH) are RT 'primer grip'. Residues 985–1001 (WETWWTEYWQATWIPEW) carry the Tryptophan repeat motif motif. An RNase H type-1 domain is found at 1021 to 1144 (IVGAETFYVD…VDKLVSAGIR (124 aa)). Mg(2+) is bound by residues Asp-1030, Glu-1065, Asp-1085, and Asp-1136. An Integrase-type zinc finger spans residues 1150–1191 (DGIDKAQDEHEKYHSNWRAMASDFNLPPVVAKEIVASCDKCQ). Residues His-1159, His-1163, Cys-1187, and Cys-1190 each contribute to the Zn(2+) site. The region spanning 1201–1351 (VDCSPGIWQL…SAGERIVDII (151 aa)) is the Integrase catalytic domain. Mg(2+)-binding residues include Asp-1211, Asp-1263, and Glu-1299. Residues 1370–1417 (FRVYYRDSRNPLWKGPAKLLWKGEGAVVIQDNSDIKVVPRRKAKIIRD) constitute a DNA-binding region (integrase-type).

Homotrimer; further assembles as hexamers of trimers. Interacts with gp41 (via C-terminus). Interacts with host CALM1; this interaction induces a conformational change in the Matrix protein, triggering exposure of the myristate group. Interacts with host AP3D1; this interaction allows the polyprotein trafficking to multivesicular bodies during virus assembly. Part of the pre-integration complex (PIC) which is composed of viral genome, matrix protein, Vpr and integrase. In terms of assembly, homodimer; the homodimer further multimerizes as homohexamers or homopentamers. Interacts with human PPIA/CYPA; This interaction stabilizes the capsid. Interacts with human NUP153. Interacts with host PDZD8; this interaction stabilizes the capsid. Interacts with monkey TRIM5; this interaction destabilizes the capsid. As to quaternary structure, homodimer, whose active site consists of two apposed aspartic acid residues. Heterodimer of p66 RT and p51 RT (RT p66/p51). Heterodimerization of RT is essential for DNA polymerase activity. The overall folding of the subdomains is similar in p66 RT and p51 RT but the spatial arrangements of the subdomains are dramatically different. In terms of assembly, homotetramer; may further associate as a homohexadecamer. Part of the pre-integration complex (PIC) which is composed of viral genome, matrix protein, Vpr and integrase. Interacts with human SMARCB1/INI1 and human PSIP1/LEDGF isoform 1. Interacts with human KPNA3; this interaction might play a role in nuclear import of the pre-integration complex. Interacts with human NUP153; this interaction might play a role in nuclear import of the pre-integration complex. It depends on Mg(2+) as a cofactor. Specific enzymatic cleavages by the viral protease yield mature proteins. The protease is released by autocatalytic cleavage. The polyprotein is cleaved during and after budding, this process is termed maturation. Proteolytic cleavage of p66 RT removes the RNase H domain to yield the p51 RT subunit. Nucleocapsid protein p7 might be further cleaved after virus entry. In terms of processing, tyrosine phosphorylated presumably in the virion by a host kinase. Phosphorylation is apparently not a major regulator of membrane association. Post-translationally, phosphorylated possibly by host MAPK1; this phosphorylation is necessary for Pin1-mediated virion uncoating. Methylated by host PRMT6, impairing its function by reducing RNA annealing and the initiation of reverse transcription.

The protein resides in the host cell membrane. It is found in the host endosome. It localises to the host multivesicular body. The protein localises to the virion membrane. Its subcellular location is the host nucleus. The protein resides in the host cytoplasm. It is found in the virion. It carries out the reaction Specific for a P1 residue that is hydrophobic, and P1' variable, but often Pro.. The enzyme catalyses Endohydrolysis of RNA in RNA/DNA hybrids. Three different cleavage modes: 1. sequence-specific internal cleavage of RNA. Human immunodeficiency virus type 1 and Moloney murine leukemia virus enzymes prefer to cleave the RNA strand one nucleotide away from the RNA-DNA junction. 2. RNA 5'-end directed cleavage 13-19 nucleotides from the RNA end. 3. DNA 3'-end directed cleavage 15-20 nucleotides away from the primer terminus.. The catalysed reaction is 3'-end directed exonucleolytic cleavage of viral RNA-DNA hybrid.. It catalyses the reaction DNA(n) + a 2'-deoxyribonucleoside 5'-triphosphate = DNA(n+1) + diphosphate. With respect to regulation, protease: The viral protease is inhibited by many synthetic protease inhibitors (PIs), such as amprenavir, atazanavir, indinavir, loprinavir, nelfinavir, ritonavir and saquinavir. Use of protease inhibitors in tritherapy regimens permit more ambitious therapeutic strategies. Reverse transcriptase/ribonuclease H: RT can be inhibited either by nucleoside RT inhibitors (NRTIs) or by non nucleoside RT inhibitors (NNRTIs). NRTIs act as chain terminators, whereas NNRTIs inhibit DNA polymerization by binding a small hydrophobic pocket near the RT active site and inducing an allosteric change in this region. Classical NRTIs are abacavir, adefovir (PMEA), didanosine (ddI), lamivudine (3TC), stavudine (d4T), tenofovir (PMPA), zalcitabine (ddC), and zidovudine (AZT). Classical NNRTIs are atevirdine (BHAP U-87201E), delavirdine, efavirenz (DMP-266), emivirine (I-EBU), and nevirapine (BI-RG-587). The tritherapies used as a basic effective treatment of AIDS associate two NRTIs and one NNRTI. Mediates, with Gag polyprotein, the essential events in virion assembly, including binding the plasma membrane, making the protein-protein interactions necessary to create spherical particles, recruiting the viral Env proteins, and packaging the genomic RNA via direct interactions with the RNA packaging sequence (Psi). Gag-Pol polyprotein may regulate its own translation, by the binding genomic RNA in the 5'-UTR. At low concentration, the polyprotein would promote translation, whereas at high concentration, the polyprotein would encapsidate genomic RNA and then shut off translation. In terms of biological role, targets the polyprotein to the plasma membrane via a multipartite membrane-binding signal, that includes its myristoylated N-terminus. Matrix protein is part of the pre-integration complex. Implicated in the release from host cell mediated by Vpu. Binds to RNA. Functionally, forms the conical core that encapsulates the genomic RNA-nucleocapsid complex in the virion. Most core are conical, with only 7% tubular. The core is constituted by capsid protein hexamer subunits. The core is disassembled soon after virion entry. Host restriction factors such as TRIM5-alpha or TRIMCyp bind retroviral capsids and cause premature capsid disassembly, leading to blocks in reverse transcription. Capsid restriction by TRIM5 is one of the factors which restricts HIV-1 to the human species. Host PIN1 apparently facilitates the virion uncoating. On the other hand, interactions with PDZD8 or CYPA stabilize the capsid. Its function is as follows. Encapsulates and protects viral dimeric unspliced genomic RNA (gRNA). Binds these RNAs through its zinc fingers. Acts as a nucleic acid chaperone which is involved in rearangement of nucleic acid secondary structure during gRNA retrotranscription. Also facilitates template switch leading to recombination. As part of the polyprotein, participates in gRNA dimerization, packaging, tRNA incorporation and virion assembly. Aspartyl protease that mediates proteolytic cleavages of Gag and Gag-Pol polyproteins during or shortly after the release of the virion from the plasma membrane. Cleavages take place as an ordered, step-wise cascade to yield mature proteins. This process is called maturation. Displays maximal activity during the budding process just prior to particle release from the cell. Also cleaves Nef and Vif, probably concomitantly with viral structural proteins on maturation of virus particles. Hydrolyzes host EIF4GI and PABP1 in order to shut off the capped cellular mRNA translation. The resulting inhibition of cellular protein synthesis serves to ensure maximal viral gene expression and to evade host immune response. Also mediates cleavage of host YTHDF3. Mediates cleavage of host CARD8, thereby activating the CARD8 inflammasome, leading to the clearance of latent HIV-1 in patient CD4(+) T-cells after viral reactivation; in contrast, HIV-1 can evade CARD8-sensing when its protease remains inactive in infected cells prior to viral budding. In terms of biological role, multifunctional enzyme that converts the viral RNA genome into dsDNA in the cytoplasm, shortly after virus entry into the cell. This enzyme displays a DNA polymerase activity that can copy either DNA or RNA templates, and a ribonuclease H (RNase H) activity that cleaves the RNA strand of RNA-DNA heteroduplexes in a partially processive 3' to 5' endonucleasic mode. Conversion of viral genomic RNA into dsDNA requires many steps. A tRNA(3)-Lys binds to the primer-binding site (PBS) situated at the 5'-end of the viral RNA. RT uses the 3' end of the tRNA primer to perform a short round of RNA-dependent minus-strand DNA synthesis. The reading proceeds through the U5 region and ends after the repeated (R) region which is present at both ends of viral RNA. The portion of the RNA-DNA heteroduplex is digested by the RNase H, resulting in a ssDNA product attached to the tRNA primer. This ssDNA/tRNA hybridizes with the identical R region situated at the 3' end of viral RNA. This template exchange, known as minus-strand DNA strong stop transfer, can be either intra- or intermolecular. RT uses the 3' end of this newly synthesized short ssDNA to perform the RNA-dependent minus-strand DNA synthesis of the whole template. RNase H digests the RNA template except for two polypurine tracts (PPTs) situated at the 5'-end and near the center of the genome. It is not clear if both polymerase and RNase H activities are simultaneous. RNase H probably can proceed both in a polymerase-dependent (RNA cut into small fragments by the same RT performing DNA synthesis) and a polymerase-independent mode (cleavage of remaining RNA fragments by free RTs). Secondly, RT performs DNA-directed plus-strand DNA synthesis using the PPTs that have not been removed by RNase H as primers. PPTs and tRNA primers are then removed by RNase H. The 3' and 5' ssDNA PBS regions hybridize to form a circular dsDNA intermediate. Strand displacement synthesis by RT to the PBS and PPT ends produces a blunt ended, linear dsDNA copy of the viral genome that includes long terminal repeats (LTRs) at both ends. Functionally, catalyzes viral DNA integration into the host chromosome, by performing a series of DNA cutting and joining reactions. This enzyme activity takes place after virion entry into a cell and reverse transcription of the RNA genome in dsDNA. The first step in the integration process is 3' processing. This step requires a complex comprising the viral genome, matrix protein, Vpr and integrase. This complex is called the pre-integration complex (PIC). The integrase protein removes 2 nucleotides from each 3' end of the viral DNA, leaving recessed CA OH's at the 3' ends. In the second step, the PIC enters cell nucleus. This process is mediated through integrase and Vpr proteins, and allows the virus to infect a non dividing cell. This ability to enter the nucleus is specific of lentiviruses, other retroviruses cannot and rely on cell division to access cell chromosomes. In the third step, termed strand transfer, the integrase protein joins the previously processed 3' ends to the 5' ends of strands of target cellular DNA at the site of integration. The 5'-ends are produced by integrase-catalyzed staggered cuts, 5 bp apart. A Y-shaped, gapped, recombination intermediate results, with the 5'-ends of the viral DNA strands and the 3' ends of target DNA strands remaining unjoined, flanking a gap of 5 bp. The last step is viral DNA integration into host chromosome. This involves host DNA repair synthesis in which the 5 bp gaps between the unjoined strands are filled in and then ligated. Since this process occurs at both cuts flanking the HIV genome, a 5 bp duplication of host DNA is produced at the ends of HIV-1 integration. Alternatively, Integrase may catalyze the excision of viral DNA just after strand transfer, this is termed disintegration. The chain is Gag-Pol polyprotein (gag-pol) from Human immunodeficiency virus type 1 group M subtype B (isolate LW123) (HIV-1).